Reading from the N-terminus, the 149-residue chain is 3-dehydroquinate dehydratase 2 (149 aa).

Tyrosine 24 (proton acceptor) is an active-site residue. Substrate-binding residues include asparagine 75, histidine 81, and aspartate 88. Histidine 101 serves as the catalytic Proton donor. Residues 102 to 103 (LS) and arginine 112 contribute to the substrate site.

The protein belongs to the type-II 3-dehydroquinase family. In terms of assembly, homododecamer.

It carries out the reaction 3-dehydroquinate = 3-dehydroshikimate + H2O. The protein operates within metabolic intermediate biosynthesis; chorismate biosynthesis; chorismate from D-erythrose 4-phosphate and phosphoenolpyruvate: step 3/7. Catalyzes a trans-dehydration via an enolate intermediate. In Pseudomonas putida (strain ATCC 47054 / DSM 6125 / CFBP 8728 / NCIMB 11950 / KT2440), this protein is 3-dehydroquinate dehydratase 2 (aroQ2).